A 257-amino-acid chain; its full sequence is Deoxyribose-phosphate aldolase (257 aa).

Residue D102 is the Proton donor/acceptor of the active site. The active-site Schiff-base intermediate with acetaldehyde is the K166. K198 (proton donor/acceptor) is an active-site residue.

The protein belongs to the DeoC/FbaB aldolase family. DeoC type 2 subfamily.

Its subcellular location is the cytoplasm. The enzyme catalyses 2-deoxy-D-ribose 5-phosphate = D-glyceraldehyde 3-phosphate + acetaldehyde. Its pathway is carbohydrate degradation; 2-deoxy-D-ribose 1-phosphate degradation; D-glyceraldehyde 3-phosphate and acetaldehyde from 2-deoxy-alpha-D-ribose 1-phosphate: step 2/2. In terms of biological role, catalyzes a reversible aldol reaction between acetaldehyde and D-glyceraldehyde 3-phosphate to generate 2-deoxy-D-ribose 5-phosphate. This chain is Deoxyribose-phosphate aldolase, found in Shewanella frigidimarina (strain NCIMB 400).